A 413-amino-acid chain; its full sequence is Gamma-glutamyl phosphate reductase (413 aa).

It belongs to the gamma-glutamyl phosphate reductase family.

The protein localises to the cytoplasm. The catalysed reaction is L-glutamate 5-semialdehyde + phosphate + NADP(+) = L-glutamyl 5-phosphate + NADPH + H(+). Its pathway is amino-acid biosynthesis; L-proline biosynthesis; L-glutamate 5-semialdehyde from L-glutamate: step 2/2. Functionally, catalyzes the NADPH-dependent reduction of L-glutamate 5-phosphate into L-glutamate 5-semialdehyde and phosphate. The product spontaneously undergoes cyclization to form 1-pyrroline-5-carboxylate. The chain is Gamma-glutamyl phosphate reductase from Caulobacter vibrioides (strain ATCC 19089 / CIP 103742 / CB 15) (Caulobacter crescentus).